Reading from the N-terminus, the 230-residue chain is Orotidine 5'-phosphate decarboxylase (230 aa).

Residues Asp-10, Lys-32, Asp-59–Thr-68, Thr-119, Arg-180, Gln-189, Gly-209, and Arg-210 each bind substrate. The active-site Proton donor is the Lys-61.

The protein belongs to the OMP decarboxylase family. Type 1 subfamily. Homodimer.

The catalysed reaction is orotidine 5'-phosphate + H(+) = UMP + CO2. The protein operates within pyrimidine metabolism; UMP biosynthesis via de novo pathway; UMP from orotate: step 2/2. Its function is as follows. Catalyzes the decarboxylation of orotidine 5'-monophosphate (OMP) to uridine 5'-monophosphate (UMP). This Glaesserella parasuis serovar 5 (strain SH0165) (Haemophilus parasuis) protein is Orotidine 5'-phosphate decarboxylase.